Reading from the N-terminus, the 452-residue chain is Pup--protein ligase (452 aa).

Glu-9 is a binding site for Mg(2+). Position 53 (Arg-53) interacts with ATP. A Mg(2+)-binding site is contributed by Tyr-55. Asp-57 serves as the catalytic Proton acceptor. Glu-63 contacts Mg(2+). ATP contacts are provided by Thr-66 and Trp-419.

The protein belongs to the Pup ligase/Pup deamidase family. Pup-conjugating enzyme subfamily.

It carries out the reaction ATP + [prokaryotic ubiquitin-like protein]-L-glutamate + [protein]-L-lysine = ADP + phosphate + N(6)-([prokaryotic ubiquitin-like protein]-gamma-L-glutamyl)-[protein]-L-lysine.. The protein operates within protein degradation; proteasomal Pup-dependent pathway. It participates in protein modification; protein pupylation. Its function is as follows. Catalyzes the covalent attachment of the prokaryotic ubiquitin-like protein modifier Pup to the proteasomal substrate proteins, thereby targeting them for proteasomal degradation. This tagging system is termed pupylation. The ligation reaction involves the side-chain carboxylate of the C-terminal glutamate of Pup and the side-chain amino group of a substrate lysine. This chain is Pup--protein ligase, found in Streptosporangium roseum (strain ATCC 12428 / DSM 43021 / JCM 3005 / KCTC 9067 / NCIMB 10171 / NRRL 2505 / NI 9100).